Here is an 80-residue protein sequence, read N- to C-terminus: Large ribosomal subunit protein uL24 (80 aa).

This sequence belongs to the universal ribosomal protein uL24 family. As to quaternary structure, part of the 50S ribosomal subunit.

One of two assembly initiator proteins, it binds directly to the 5'-end of the 23S rRNA, where it nucleates assembly of the 50S subunit. In terms of biological role, one of the proteins that surrounds the polypeptide exit tunnel on the outside of the subunit. The chain is Large ribosomal subunit protein uL24 from Prosthecochloris aestuarii (strain DSM 271 / SK 413).